The primary structure comprises 92 residues: Cell division protein FtsL (92 aa).

The Cytoplasmic portion of the chain corresponds to 1-3 (MGR). The helical transmembrane segment at 4–21 (ISLIVAALLMLSAISLVT) threads the bilayer. Residues 22 to 92 (SRYQSRQLFI…YMNQPAGGAQ (71 aa)) lie on the Periplasmic side of the membrane.

Belongs to the FtsL family. Part of a complex composed of FtsB, FtsL and FtsQ.

The protein resides in the cell inner membrane. Its function is as follows. Essential cell division protein. May link together the upstream cell division proteins, which are predominantly cytoplasmic, with the downstream cell division proteins, which are predominantly periplasmic. In Bordetella pertussis (strain Tohama I / ATCC BAA-589 / NCTC 13251), this protein is Cell division protein FtsL.